The chain runs to 486 residues: Transcription enhancer factor-like protein egl-44 (486 aa).

Low complexity predominate over residues 47-57; it reads GTTTPTTTSGG. Residues 47–87 are disordered; it reads GTTTPTTTSGGQMMTLSPPAGDGPGSAGSMAPESTSSLSDL. Residues 88 to 164 constitute a DNA-binding region (TEA); it reads SGDAEGVWSI…QVLARKKLRD (77 aa). The segment at 165–188 is disordered; it reads EQAKKKGDIPSLLQQASPPGGVKS.

As to quaternary structure, interacts (via N-terminus) with egl-46 (via C-terminus); the interaction is direct; the interaction may regulate transcription. Interacts with yap-1 (via WW domain); the interaction may regulate transcription. As to expression, expressed in HSN neurons in embryos and in the FLP neurons from the L1 stage through to adults. Not expressed in touch cells. Also expressed in larval hypodermis, intestine, pharyngeal muscle and other neurons. In adults expression is lost from some neurons, is weaker in the hypodermis but remains in the intestine. Expressed in HOB neuron, ray neurons RnA and RnB, and the ray structural cell, Rnst; rays are male-specific genital sensilla (simple sense organs).

The protein localises to the nucleus. In terms of biological role, transcription factor. Binds to DNA sequence motif 5'-CATNNNNAAATGCAT-3' as a heterodimer with egl-46. Represses expression of genes involved in differentiation of touch receptor neurons (TRN), probably acting as a heterodimer with egl-46, perhaps by occupying similar cis-regulatory elements as an unc-86/mec-3 heterodimer. Plays a role in cell fate specification of neurons, including the hook neuron HOB, and touch receptor neurons. Involved in male mating behavior, acting in concert with egl-46, via modulation of expression of polycystins lov-1 and pkd-2, homeodomain protein ceh-26, and neuropeptide-like protein nlp-8. Acts upstream of egl-46 to prevent touch cell differentiation in FLP neurons. Plays a role in neuron differentiation by repressing the expression of zag-1 in FLP neurons, probably acting as a heterodimer with egl-46; because zag-1 represses expression of egl-46 and egl-44, together these proteins form a bistable, negative-feedback loop that regulates the choice between neuronal fates. Also promotes HSN neuron development. In association with egl-46, regulates cell cycle exit in the neuronal Q cell lineage. Plays a role in specifying commissural dendrites of the PVD nociceptive neurons, acting in concert with egl-46. May be involved in thermal stress response downstream of yap-1. The polypeptide is Transcription enhancer factor-like protein egl-44 (egl-44) (Caenorhabditis elegans).